The sequence spans 408 residues: uncharacterized protein (408 aa).

2 disordered regions span residues 184–206 (DENNNNSNNNNNNNSNNNSSILF) and 254–317 (NNKT…SSDS). The segment covering 187–206 (NNNSNNNNNNNSNNNSSILF) has biased composition (low complexity).

This is an uncharacterized protein from Dictyostelium discoideum (Social amoeba).